Here is a 588-residue protein sequence, read N- to C-terminus: Aspartate--tRNA ligase (588 aa).

Glu172 serves as a coordination point for L-aspartate. Residues Gln196–Lys199 are aspartate. Residue Arg218 participates in L-aspartate binding. ATP is bound by residues Arg218–Glu220 and Gln227. His449 contributes to the L-aspartate binding site. Glu483 is an ATP binding site. Arg490 contacts L-aspartate. ATP is bound at residue Gly535 to Arg538.

This sequence belongs to the class-II aminoacyl-tRNA synthetase family. Type 1 subfamily. Homodimer.

Its subcellular location is the cytoplasm. The catalysed reaction is tRNA(Asp) + L-aspartate + ATP = L-aspartyl-tRNA(Asp) + AMP + diphosphate. Its function is as follows. Catalyzes the attachment of L-aspartate to tRNA(Asp) in a two-step reaction: L-aspartate is first activated by ATP to form Asp-AMP and then transferred to the acceptor end of tRNA(Asp). This Histophilus somni (strain 2336) (Haemophilus somnus) protein is Aspartate--tRNA ligase.